The primary structure comprises 299 residues: Tetrahydromethanopterin S-methyltransferase subunit E (299 aa).

6 helical membrane passes run 57-77 (AISGEPVSYGLYVAVAGTIAW), 80-100 (INAGLNAVLAIIVGSGVAAIV), 133-153 (IGPIVGHGFIAVFTMTLAAYL), 158-178 (LGNPFPLPLVALIFGITVGAI), 226-246 (YFCSRFGGPLTGLCFGLIIFL), and 262-282 (VTKTSIALLVGLLVVAVAAVI).

The protein belongs to the MtrE family. The complex is composed of 8 subunits; MtrA, MtrB, MtrC, MtrD, MtrE, MtrF, MtrG and MtrH.

It localises to the cell membrane. It catalyses the reaction 5-methyl-5,6,7,8-tetrahydromethanopterin + coenzyme M + 2 Na(+)(in) = 5,6,7,8-tetrahydromethanopterin + methyl-coenzyme M + 2 Na(+)(out). It functions in the pathway one-carbon metabolism; methanogenesis from CO(2); methyl-coenzyme M from 5,10-methylene-5,6,7,8-tetrahydromethanopterin: step 2/2. Functionally, part of a complex that catalyzes the formation of methyl-coenzyme M and tetrahydromethanopterin from coenzyme M and methyl-tetrahydromethanopterin. This is an energy-conserving, sodium-ion translocating step. The protein is Tetrahydromethanopterin S-methyltransferase subunit E of Methanococcus maripaludis (strain C7 / ATCC BAA-1331).